The primary structure comprises 95 residues: Large ribosomal subunit protein uL23 (95 aa).

It belongs to the universal ribosomal protein uL23 family. Part of the 50S ribosomal subunit. Contacts protein L29, and trigger factor when it is bound to the ribosome.

Its function is as follows. One of the early assembly proteins it binds 23S rRNA. One of the proteins that surrounds the polypeptide exit tunnel on the outside of the ribosome. Forms the main docking site for trigger factor binding to the ribosome. The polypeptide is Large ribosomal subunit protein uL23 (Coxiella burnetii (strain CbuK_Q154) (Coxiella burnetii (strain Q154))).